We begin with the raw amino-acid sequence, 486 residues long: Serine/threonine-protein phosphatase 2A 56 kDa regulatory subunit alpha isoform (486 aa).

Residues 1–18 (MSSSSPPAGAASAAISAS) are compositionally biased toward low complexity. Residues 1-52 (MSSSSPPAGAASAAISASEKVDGFTRKSVRKAQRQKRSQGSSQFRSQGSQAE) are disordered. The residue at position 2 (serine 2) is an N-acetylserine. The span at 27 to 37 (KSVRKAQRQKR) shows a compositional bias: basic residues. Residues 38 to 51 (SQGSSQFRSQGSQA) are compositionally biased toward low complexity. Serine 41, serine 42, and serine 49 each carry phosphoserine.

This sequence belongs to the phosphatase 2A regulatory subunit B56 family. PP2A consists of a common heterodimeric core enzyme, composed of a 36 kDa catalytic subunit (subunit C) and a 65 kDa constant regulatory subunit (PR65 or subunit A), that associates with a variety of regulatory subunits. Proteins that associate with the core dimer include three families of regulatory subunits B (the R2/B/PR55/B55, R3/B''/PR72/PR130/PR59 and R5/B'/B56 families), the 48 kDa variable regulatory subunit, viral proteins, and cell signaling molecules. Interacts with SGO1. Phosphorylated on serine residues. As to expression, widely expressed with the highest expression in heart and skeletal muscle.

Its subcellular location is the cytoplasm. The protein resides in the nucleus. It is found in the chromosome. The protein localises to the centromere. Functionally, the B regulatory subunit might modulate substrate selectivity and catalytic activity, and might also direct the localization of the catalytic enzyme to a particular subcellular compartment. The sequence is that of Serine/threonine-protein phosphatase 2A 56 kDa regulatory subunit alpha isoform (PPP2R5A) from Homo sapiens (Human).